The sequence spans 130 residues: Protein NrdI (130 aa).

This sequence belongs to the NrdI family.

In terms of biological role, probably involved in ribonucleotide reductase function. In Bartonella bacilliformis (strain ATCC 35685 / KC583 / Herrer 020/F12,63), this protein is Protein NrdI.